The sequence spans 219 residues: 2-C-methyl-D-erythritol 4-phosphate cytidylyltransferase (219 aa).

It belongs to the IspD/TarI cytidylyltransferase family. IspD subfamily.

The catalysed reaction is 2-C-methyl-D-erythritol 4-phosphate + CTP + H(+) = 4-CDP-2-C-methyl-D-erythritol + diphosphate. Its pathway is isoprenoid biosynthesis; isopentenyl diphosphate biosynthesis via DXP pathway; isopentenyl diphosphate from 1-deoxy-D-xylulose 5-phosphate: step 2/6. Functionally, catalyzes the formation of 4-diphosphocytidyl-2-C-methyl-D-erythritol from CTP and 2-C-methyl-D-erythritol 4-phosphate (MEP). The polypeptide is 2-C-methyl-D-erythritol 4-phosphate cytidylyltransferase (Chlamydia trachomatis serovar L2 (strain ATCC VR-902B / DSM 19102 / 434/Bu)).